The sequence spans 1694 residues: Clathrin heavy chain (1694 aa).

The tract at residues 1-478 (MTNLPIRFQE…HDRKLALSIY (478 aa)) is globular terminal domain. 7 WD40-like repeat regions span residues 23 to 67 (SIGF…KQMK), 68 to 107 (TDAA…MQEP), 108 to 149 (LEFW…PDLQ), 150 to 195 (NTEI…QSIE), 196 to 256 (GHAA…EIGA), 257 to 300 (SDFP…ISNE), and 301 to 329 (NIFV…VSID). The interval 448-464 (EKWLTEDKLECSEQLGD) is binding site for the uncoating ATPase, involved in lattice disassembly. The interval 479 to 522 (YRANASDKVITLFAETGEFDKIIAYCKKFNYKPDFMFLLQRMAN) is flexible linker. Residues 523-1694 (ANPMGAADFA…QQNYNQYGGF (1172 aa)) are heavy chain arm. 7 CHCR repeats span residues 537–681 (KEEG…QNLQ), 687–829 (AVSY…QEDY), 834–973 (IMSV…SLID), 980–1125 (LPES…VKEC), 1129–1270 (FIKA…FRLA), 1275–1421 (INII…LLIN), and 1424–1567 (LSVL…NSAF). Residues 1214 to 1523 (AAKVLYTNIS…YLYKKNNRWA (310 aa)) are involved in binding clathrin light chain. Residues 1551-1694 (GEELLQYFVD…QQNYNQYGGF (144 aa)) form a trimerization region. Residues 1610–1640 (KVDQLVDDFKARQKKTEEEKEQQNIESSQYQ) adopt a coiled-coil conformation.

This sequence belongs to the clathrin heavy chain family. As to quaternary structure, clathrin coats are formed from molecules containing 3 heavy chains and 3 light chains.

It is found in the cytoplasmic vesicle membrane. The protein localises to the membrane. The protein resides in the coated pit. Clathrin is the major protein of the polyhedral coat of coated pits and vesicles. In Dictyostelium discoideum (Social amoeba), this protein is Clathrin heavy chain (chcA).